A 209-amino-acid polypeptide reads, in one-letter code: Ribosomal RNA large subunit methyltransferase E (209 aa).

5 residues coordinate S-adenosyl-L-methionine: glycine 63, tryptophan 65, aspartate 83, aspartate 99, and aspartate 124. Lysine 164 functions as the Proton acceptor in the catalytic mechanism.

This sequence belongs to the class I-like SAM-binding methyltransferase superfamily. RNA methyltransferase RlmE family.

It is found in the cytoplasm. The enzyme catalyses uridine(2552) in 23S rRNA + S-adenosyl-L-methionine = 2'-O-methyluridine(2552) in 23S rRNA + S-adenosyl-L-homocysteine + H(+). Specifically methylates the uridine in position 2552 of 23S rRNA at the 2'-O position of the ribose in the fully assembled 50S ribosomal subunit. This Shigella dysenteriae serotype 1 (strain Sd197) protein is Ribosomal RNA large subunit methyltransferase E.